Consider the following 277-residue polypeptide: Pantothenate synthetase (277 aa).

26-33 provides a ligand contact to ATP; the sequence is MGNLHEGH. His-33 (proton donor) is an active-site residue. A (R)-pantoate-binding site is contributed by Gln-57. A beta-alanine-binding site is contributed by Gln-57. 144-147 lines the ATP pocket; that stretch reads GKKD. Residue Gln-150 coordinates (R)-pantoate. Residues Val-173 and 181 to 184 contribute to the ATP site; that span reads LSSR.

It belongs to the pantothenate synthetase family. Homodimer.

The protein localises to the cytoplasm. It carries out the reaction (R)-pantoate + beta-alanine + ATP = (R)-pantothenate + AMP + diphosphate + H(+). It participates in cofactor biosynthesis; (R)-pantothenate biosynthesis; (R)-pantothenate from (R)-pantoate and beta-alanine: step 1/1. Functionally, catalyzes the condensation of pantoate with beta-alanine in an ATP-dependent reaction via a pantoyl-adenylate intermediate. The polypeptide is Pantothenate synthetase (Paraburkholderia xenovorans (strain LB400)).